Here is a 238-residue protein sequence, read N- to C-terminus: Dolichyldiphosphatase 1 (238 aa).

Transmembrane regions (helical) follow at residues 33 to 53 (LAYL…LIIF), 100 to 120 (PSSH…FLYL), 130 to 150 (FLDL…AFLV), and 162 to 182 (WSQV…WFAF).

Belongs to the dolichyldiphosphatase family.

It localises to the endoplasmic reticulum membrane. It carries out the reaction a di-trans,poly-cis-dolichyl diphosphate + H2O = a di-trans,poly-cis-dolichyl phosphate + phosphate + H(+). It participates in protein modification; protein glycosylation. Its function is as follows. Required for efficient N-glycosylation. Necessary for maintaining optimal levels of dolichol-linked oligosaccharides. Hydrolyzes dolichyl pyrophosphate at a very high rate and dolichyl monophosphate at a much lower rate. Does not act on phosphatidate. This chain is Dolichyldiphosphatase 1 (DOLPP1), found in Rhinolophus ferrumequinum (Greater horseshoe bat).